We begin with the raw amino-acid sequence, 624 residues long: DNA mismatch repair protein MutL (624 aa).

This sequence belongs to the DNA mismatch repair MutL/HexB family.

In terms of biological role, this protein is involved in the repair of mismatches in DNA. It is required for dam-dependent methyl-directed DNA mismatch repair. May act as a 'molecular matchmaker', a protein that promotes the formation of a stable complex between two or more DNA-binding proteins in an ATP-dependent manner without itself being part of a final effector complex. This chain is DNA mismatch repair protein MutL, found in Xanthomonas campestris pv. campestris (strain B100).